A 485-amino-acid polypeptide reads, in one-letter code: AP2-like ethylene-responsive transcription factor TOE2 (485 aa).

The segment covering 124–135 has biased composition (gly residues); that stretch reads GDFIGSGSGGGD. The tract at residues 124–161 is disordered; the sequence is GDFIGSGSGGGDASRVMQPPSQPVKKSRRGPRSKSSQY. Positions 160–216 form a DNA-binding region, AP2/ERF; sequence QYRGVTFYRRTGRWESHIWDCGKQVYLGGFDTAHAAARAYDRAAVKFRGLEADINFV.

Belongs to the AP2/ERF transcription factor family. AP2 subfamily.

The protein localises to the nucleus. Its function is as follows. Probably acts as a transcriptional activator. Binds to the GCC-box pathogenesis-related promoter element. May be involved in the regulation of gene expression by stress factors and by components of stress signal transduction pathways. Regulates negatively the transition to flowering time and confers flowering time delay. The polypeptide is AP2-like ethylene-responsive transcription factor TOE2 (TOE2) (Arabidopsis thaliana (Mouse-ear cress)).